We begin with the raw amino-acid sequence, 426 residues long: Branched-chain amino acid permease BrnQ (426 aa).

12 consecutive transmembrane segments (helical) span residues 11–31 (LMLF…MLGL), 41–61 (ILGF…AVVL), 76–96 (IFGL…YALP), 111–131 (NALY…ALSW), 140–160 (LGKW…VLSV), 186–206 (GYMT…ISAF), 219–239 (VVSA…LGSI), 268–288 (IMFV…LISA), 296–316 (LLPG…SFGV), 324–344 (VLAV…TLVF), 358–378 (TYLF…IPAL), and 390–410 (MSLG…AIDW).

The protein belongs to the branched chain amino acid transporter family.

Its subcellular location is the cell membrane. Branched chain amino acid transport system, which transports isoleucine. The polypeptide is Branched-chain amino acid permease BrnQ (Corynebacterium glutamicum (strain ATCC 13032 / DSM 20300 / JCM 1318 / BCRC 11384 / CCUG 27702 / LMG 3730 / NBRC 12168 / NCIMB 10025 / NRRL B-2784 / 534)).